Reading from the N-terminus, the 141-residue chain is Hemoglobin subunit alpha (141 aa).

The region spanning 1 to 141 (VLSPADKTNV…VSTVLTSKYR (141 aa)) is the Globin domain. A Phosphoserine modification is found at Ser3. The residue at position 7 (Lys7) is an N6-succinyllysine. Residue Thr8 is modified to Phosphothreonine. Lys11 carries the N6-succinyllysine modification. The residue at position 16 (Lys16) is an N6-acetyllysine; alternate. The residue at position 16 (Lys16) is an N6-succinyllysine; alternate. Tyr24 is modified (phosphotyrosine). Ser35 is subject to Phosphoserine. An N6-succinyllysine modification is found at Lys40. A Phosphoserine modification is found at Ser49. An O2-binding site is contributed by His58. His87 provides a ligand contact to heme b. Ser102 carries the post-translational modification Phosphoserine. A Phosphothreonine modification is found at Thr108. Residue Ser124 is modified to Phosphoserine. Phosphothreonine occurs at positions 134 and 137. Phosphoserine is present on Ser138.

This sequence belongs to the globin family. Heterotetramer of two alpha chains and two beta chains. As to expression, red blood cells.

Involved in oxygen transport from the lung to the various peripheral tissues. Functionally, hemopressin acts as an antagonist peptide of the cannabinoid receptor CNR1. Hemopressin-binding efficiently blocks cannabinoid receptor CNR1 and subsequent signaling. The polypeptide is Hemoglobin subunit alpha (HBA) (Odobenus rosmarus divergens (Pacific walrus)).